Here is a 222-residue protein sequence, read N- to C-terminus: MTHPLFRHAEFYTTVNRLQDLPQTAGVEVAFAGRSNAGKSSAINTLVGRERFAFVSKTPGRTQHINFFQLGEERFMVDLPGYGYAQVPLAIRQHWGHLLSSYLQTRQSLYGMILIMDIRHPLTKLDLQMLDWFRQTKKPVHVLLTKADKLSKSRALVALNEVRQFLTVNYPHCTVQTFSSLKVAGVEEASQLLQNWFDTGHASVQQENGEISEQKKTPAKGD.

The 175-residue stretch at 25-199 (AGVEVAFAGR…SQLLQNWFDT (175 aa)) folds into the EngB-type G domain. Residues 33–40 (GRSNAGKS), 60–64 (GRTQH), 78–81 (DLPG), 145–148 (TKAD), and 178–180 (FSS) each bind GTP. Mg(2+) is bound by residues Ser-40 and Thr-62.

This sequence belongs to the TRAFAC class TrmE-Era-EngA-EngB-Septin-like GTPase superfamily. EngB GTPase family. Mg(2+) is required as a cofactor.

In terms of biological role, necessary for normal cell division and for the maintenance of normal septation. The sequence is that of Probable GTP-binding protein EngB from Nitrosomonas europaea (strain ATCC 19718 / CIP 103999 / KCTC 2705 / NBRC 14298).